The following is an 89-amino-acid chain: UPF0335 protein CCNA_03428 (89 aa).

This sequence belongs to the UPF0335 family.

This chain is UPF0335 protein CCNA_03428, found in Caulobacter vibrioides (strain NA1000 / CB15N) (Caulobacter crescentus).